The sequence spans 233 residues: Ribonuclease HII (233 aa).

Residues 21-211 enclose the RNase H type-2 domain; sequence KIIAGVDEVG…LDALPQWRHL (191 aa). 3 residues coordinate a divalent metal cation: Asp27, Glu28, and Asp119.

It belongs to the RNase HII family. Mn(2+) is required as a cofactor. It depends on Mg(2+) as a cofactor.

It localises to the cytoplasm. The catalysed reaction is Endonucleolytic cleavage to 5'-phosphomonoester.. Functionally, endonuclease that specifically degrades the RNA of RNA-DNA hybrids. This chain is Ribonuclease HII (rnhB), found in Streptomyces coelicolor (strain ATCC BAA-471 / A3(2) / M145).